The following is a 361-amino-acid chain: 3-dehydroquinate synthase (361 aa).

Residues 105 to 109 (GVIGD), 129 to 130 (TT), Lys-142, Lys-151, and 169 to 172 (FLST) each bind NAD(+). The Zn(2+) site is built by Glu-184, His-247, and His-264.

This sequence belongs to the sugar phosphate cyclases superfamily. Dehydroquinate synthase family. The cofactor is Co(2+). Zn(2+) serves as cofactor. It depends on NAD(+) as a cofactor.

It is found in the cytoplasm. It catalyses the reaction 7-phospho-2-dehydro-3-deoxy-D-arabino-heptonate = 3-dehydroquinate + phosphate. Its pathway is metabolic intermediate biosynthesis; chorismate biosynthesis; chorismate from D-erythrose 4-phosphate and phosphoenolpyruvate: step 2/7. In terms of biological role, catalyzes the conversion of 3-deoxy-D-arabino-heptulosonate 7-phosphate (DAHP) to dehydroquinate (DHQ). The sequence is that of 3-dehydroquinate synthase from Endomicrobium trichonymphae.